We begin with the raw amino-acid sequence, 168 residues long: Ribosome maturation factor RimM (168 aa).

Positions 94–167 constitute a PRC barrel domain; the sequence is DGNYYHHQII…KVIIELLDGL (74 aa).

This sequence belongs to the RimM family. In terms of assembly, binds ribosomal protein uS19.

The protein resides in the cytoplasm. Its function is as follows. An accessory protein needed during the final step in the assembly of 30S ribosomal subunit, possibly for assembly of the head region. Essential for efficient processing of 16S rRNA. May be needed both before and after RbfA during the maturation of 16S rRNA. It has affinity for free ribosomal 30S subunits but not for 70S ribosomes. This chain is Ribosome maturation factor RimM, found in Ligilactobacillus salivarius (strain UCC118) (Lactobacillus salivarius).